A 120-amino-acid chain; its full sequence is Ribonuclease P protein component (120 aa).

Belongs to the RnpA family. As to quaternary structure, consists of a catalytic RNA component (M1 or rnpB) and a protein subunit.

It catalyses the reaction Endonucleolytic cleavage of RNA, removing 5'-extranucleotides from tRNA precursor.. In terms of biological role, RNaseP catalyzes the removal of the 5'-leader sequence from pre-tRNA to produce the mature 5'-terminus. It can also cleave other RNA substrates such as 4.5S RNA. The protein component plays an auxiliary but essential role in vivo by binding to the 5'-leader sequence and broadening the substrate specificity of the ribozyme. The polypeptide is Ribonuclease P protein component (Mycobacterium leprae (strain Br4923)).